Reading from the N-terminus, the 316-residue chain is Protoheme IX farnesyltransferase (316 aa).

9 consecutive transmembrane segments (helical) span residues 32 to 52, 53 to 73, 93 to 113, 116 to 136, 152 to 172, 180 to 200, 221 to 241, 252 to 271, and 289 to 309; these read VMSL…GHIH, PVLG…SGAL, IPAG…LSGF, VILG…TIFF, NIVI…ACVT, TVLF…LALF, VTKH…VLPS, LVAA…VWRM, and IFYL…PVLV.

This sequence belongs to the UbiA prenyltransferase family. Protoheme IX farnesyltransferase subfamily.

It is found in the cell inner membrane. The catalysed reaction is heme b + (2E,6E)-farnesyl diphosphate + H2O = Fe(II)-heme o + diphosphate. It participates in porphyrin-containing compound metabolism; heme O biosynthesis; heme O from protoheme: step 1/1. Its function is as follows. Converts heme B (protoheme IX) to heme O by substitution of the vinyl group on carbon 2 of heme B porphyrin ring with a hydroxyethyl farnesyl side group. The polypeptide is Protoheme IX farnesyltransferase (Rhizobium johnstonii (strain DSM 114642 / LMG 32736 / 3841) (Rhizobium leguminosarum bv. viciae)).